We begin with the raw amino-acid sequence, 425 residues long: Diacetylchitobiose binding protein DasA (425 aa).

A signal peptide spans 1–20; sequence MKRKLIAAIGIAGMMVSIAA. A lipid anchor (N-palmitoyl cysteine) is attached at Cys21. Cys21 carries the S-diacylglycerol cysteine lipid modification.

This sequence belongs to the bacterial solute-binding protein 1 family. In terms of assembly, the complex is composed of two ATP-binding proteins (MsiK), two transmembrane proteins (DasB and DasC) and a solute-binding protein (DasA).

The protein localises to the cell membrane. Functionally, part of the ABC transporter complex DasABC-MsiK involved in N,N'-diacetylchitobiose ((GlcNAc)2) uptake. Binds specifically to (GlcNAc)2. Can also bind to GlcNAc, (GlcNAc)3, (GlcNAc)4 and (GlcNAc)5, but it exhibits the highest affinity for (GlcNAc)2. Involved in the control of morphological differentiation. This chain is Diacetylchitobiose binding protein DasA, found in Streptomyces coelicolor (strain ATCC BAA-471 / A3(2) / M145).